A 44-amino-acid chain; its full sequence is Large ribosomal subunit protein bL34 (44 aa).

The tract at residues Met-1–Gly-26 is disordered. Residues Pro-7–Met-22 are compositionally biased toward basic residues.

This sequence belongs to the bacterial ribosomal protein bL34 family.

The sequence is that of Large ribosomal subunit protein bL34 from Agathobacter rectalis (strain ATCC 33656 / DSM 3377 / JCM 17463 / KCTC 5835 / VPI 0990) (Eubacterium rectale).